Here is a 1119-residue protein sequence, read N- to C-terminus: MSKAEREMYKKVRRIMVSDLKRDLIGPAHDESDVIYEAPSQAYITGILYPLESEVETEKSLEDVQFADVYDEPESGMEEDVEQQRNSELEQEAEEEKITPNKKFKHQNSLGIRCYVRETTDHIRASIAWGRYTSSKKFDSERKREVILWTRQIECFEEYISLSSFDQNIDIPITQEVSLVVSKKKLSGTDVFLVSVFLVNKRVDKNSNNAMFQCELTLTHEEGKGIFLCENEARKDKNDFSEFLYRNKPVFAKGFGCAVTWKAESSNYASELKSAFIPEHEVESMSTDLPYDENYGELPKGYFSIKQFAEADDQRETIDKLNNLANRYESWINKLPVDKVANKEATERVIKDCQATLTRIRRGIQLLANEENNKAFVAFKFMNTVMHTQDAMKRYSRNNKTTTLETEIRKENLEWRPFQLAFILLNLEGLVDLKSKDRKIVDLLWFPTGGGKTEAYLGICAFLLGYRRLFASTSSAYERDGGVTILLRYTLRLLTTQQRDRLMRMISACEYTRQKTNAFGQSEFSVGFWVGAQVTVNKLDDLTENEYYLDRDKVLKEYEKIEKQVIECPCCGTKGLEYKFLPSRDTKTKKTGIKIFCTNESCFFSKTHIPVYLVDEEIYRKLPTVVISTVDKFARLPWDEKTAALFGKVNRFCERCGYIAEGEKHEKSHRNPKASVHDVKPFYPPELIIQDELHLITGPLGTVYGGYETVIEELSTAHEGEDYLKPKYIAATATIKNAEVQVEKVFGRKLTQQFPPPGLKVEDSFFARERNLDEFPFRLYAGVCVSGHSMKTVLLRIYAVLLQTTEHLLEDEELSKYIDPYRTLVGYFNSIRELGGAVRLLEDDIKKRIQTLQKKYKYSKQRYISRKPELTSRVPSSRIPKVLEQLEKEIGNEELDVVLATNMISVGMDVDRLGLMVITGQPKQTSEYIQSSSRVGRSKPGLVITVYNPYRPRDMSHYQNFKGYHQRLYHFVEGTTATPYASRARDRFLHAIAVALLRLSYPELAKNLDAKNIKDMDLNYLKDVVKKRVSTVEYRNVSDTMEHLQHFLDEWISRAVSEDNLQYYFNPKTRSARIGNQSRLLARFSEEKKHGGKPTLDSMRQVEGTSSLYIYEGWNSSEE.

Residues 73–95 form a disordered region; that stretch reads PESGMEEDVEQQRNSELEQEAEE. A Helicase C-terminal domain is found at 813-986; that stretch reads ELSKYIDPYR…ATPYASRARD (174 aa).

Belongs to the helicase family.

The protein localises to the cytoplasm. In terms of biological role, component of antiviral defense system DISARM (defense island system associated with restriction-modification), composed of DrmE, DrmA, DrmB, DrmC and DrmMII. DISARM is probably a multi-gene restriction module, this subunit is probably a helicase. Expression of DISARM in B.subtilis (strain BEST7003) confers resistance to phages Nf, phi29, phi105, phi3T, SPO1, SPR and SPP1. Protection is over 10(7)-fold against phi3T, 10(4)-10(5)-fold against Nf, phi29, phi105 and SPR, 100-fold against SPO1 and 10-fold against SPP1. DISARM does not interfere with phage adsorption, but instead interferes with (phi3T) DNA replication early in its cycle, preventing replication, circularization and lysogeny and probably causes phage DNA degradation (DNA is degraded in SPP1-infected cells). In Bacillus paralicheniformis (strain ATCC 9945a / NCIMB 11709 / CD-2), this protein is DISARM protein DrmA.